The chain runs to 586 residues: Aspartate--tRNA(Asp/Asn) ligase (586 aa).

Residue Glu-175 coordinates L-aspartate. An aspartate region spans residues 199-202 (QIFK). Arg-221 provides a ligand contact to L-aspartate. Residues 221-223 (RDE) and Gln-230 each bind ATP. His-448 lines the L-aspartate pocket. ATP is bound at residue Glu-482. Arg-489 provides a ligand contact to L-aspartate. Position 534–537 (534–537 (GVDR)) interacts with ATP.

The protein belongs to the class-II aminoacyl-tRNA synthetase family. Type 1 subfamily. Homodimer.

The protein resides in the cytoplasm. The enzyme catalyses tRNA(Asx) + L-aspartate + ATP = L-aspartyl-tRNA(Asx) + AMP + diphosphate. In terms of biological role, aspartyl-tRNA synthetase with relaxed tRNA specificity since it is able to aspartylate not only its cognate tRNA(Asp) but also tRNA(Asn). Reaction proceeds in two steps: L-aspartate is first activated by ATP to form Asp-AMP and then transferred to the acceptor end of tRNA(Asp/Asn). This is Aspartate--tRNA(Asp/Asn) ligase from Syntrophomonas wolfei subsp. wolfei (strain DSM 2245B / Goettingen).